A 174-amino-acid chain; its full sequence is Single-stranded DNA-binding protein 1 (174 aa).

Positions 6 to 111 (VNKVILVGNL…VVVNVGGTMQ (106 aa)) constitute an SSB domain. A DNA-binding region spans residues 55-61 (WHRVVLF). Positions 110–174 (MQMLGGRQGG…PMDFDDDIPF (65 aa)) are disordered. Residues 115-133 (GRQGGGAPAGGGQQQGGWG) are compositionally biased toward gly residues. Low complexity predominate over residues 134–160 (QPQQPQGGNQFSGGAQSRPQQQAPAAP). Residues 169-174 (DDDIPF) carry the Important for interaction with partner proteins motif.

Homotetramer. Binds PriA via its C-terminus.

In terms of biological role, plays an important role in DNA replication, recombination and repair. Binds to ssDNA and to an array of partner proteins to recruit them to their sites of action during DNA metabolism. Stimulates the ATPase activity of PriA. One tetramer binds to 26 nucleotides (nt) of ssDNA, a 55 nt piece of ssDNA probably binds 2 tetramers. The polypeptide is Single-stranded DNA-binding protein 1 (Klebsiella pneumoniae subsp. pneumoniae (strain ATCC 700721 / MGH 78578)).